A 1412-amino-acid chain; its full sequence is DNA-directed RNA polymerase subunit beta' (1412 aa).

4 residues coordinate Zn(2+): C70, C72, C85, and C88. Mg(2+) is bound by residues D458, D460, and D462. Zn(2+) contacts are provided by C813, C887, C894, and C897. The disordered stretch occupies residues 1388 to 1412 (EQALLTPATTAEAVVGEEPAPPPAQ). Low complexity predominate over residues 1393–1405 (TPATTAEAVVGEE).

This sequence belongs to the RNA polymerase beta' chain family. The RNAP catalytic core consists of 2 alpha, 1 beta, 1 beta' and 1 omega subunit. When a sigma factor is associated with the core the holoenzyme is formed, which can initiate transcription. It depends on Mg(2+) as a cofactor. Zn(2+) serves as cofactor.

It carries out the reaction RNA(n) + a ribonucleoside 5'-triphosphate = RNA(n+1) + diphosphate. Functionally, DNA-dependent RNA polymerase catalyzes the transcription of DNA into RNA using the four ribonucleoside triphosphates as substrates. In Methylibium petroleiphilum (strain ATCC BAA-1232 / LMG 22953 / PM1), this protein is DNA-directed RNA polymerase subunit beta'.